The following is a 285-amino-acid chain: Ribosomal RNA small subunit methyltransferase I (285 aa).

The protein belongs to the methyltransferase superfamily. RsmI family.

The protein resides in the cytoplasm. The catalysed reaction is cytidine(1402) in 16S rRNA + S-adenosyl-L-methionine = 2'-O-methylcytidine(1402) in 16S rRNA + S-adenosyl-L-homocysteine + H(+). In terms of biological role, catalyzes the 2'-O-methylation of the ribose of cytidine 1402 (C1402) in 16S rRNA. The sequence is that of Ribosomal RNA small subunit methyltransferase I from Mycobacterium tuberculosis (strain CDC 1551 / Oshkosh).